The sequence spans 188 residues: Protein YOP1 (188 aa).

Over 1-35 (MAEIAGNLQRILQSLDRQFAGNKYLQEFERKTGFP) the chain is Cytoplasmic. The chain crosses the membrane as a helical span at residues 36–55 (KSYAIAGAGVAYLFIIFINV). The Lumenal portion of the chain corresponds to 56–57 (GG). Residues 58–78 (VGEILSNFLGFVLPCYYSLHA) form a helical membrane-spanning segment. Residues 79 to 88 (IKTTTTADDT) are Cytoplasmic-facing. A helical membrane pass occupies residues 89 to 105 (ELLTYWIVFAFFSVIEF). Residues 106–108 (WSK) lie on the Lumenal side of the membrane. A helical transmembrane segment spans residues 109–127 (AILYWVPFYWFFKTIFLIF). The Cytoplasmic segment spans residues 128–188 (IALPQLGGAS…TGAASHQSSD (61 aa)). The disordered stretch occupies residues 163–188 (ISSKMEQAAKGASARATGAASHQSSD). Low complexity predominate over residues 170–188 (AAKGASARATGAASHQSSD).

It belongs to the DP1 family. As to quaternary structure, oligomer.

Its subcellular location is the endoplasmic reticulum membrane. It localises to the golgi apparatus membrane. In terms of biological role, required to generate and maintain the structure of the tubular endoplasmic reticulum network and the vacuole. Induces high curvature in membranes and causes membrane tubule formation. Involved in membrane/vesicle trafficking. This chain is Protein YOP1 (YOP1), found in Eremothecium gossypii (strain ATCC 10895 / CBS 109.51 / FGSC 9923 / NRRL Y-1056) (Yeast).